We begin with the raw amino-acid sequence, 187 residues long: Frequenin-1 (187 aa).

Residue G2 is the site of N-myristoyl glycine attachment. EF-hand domains are found at residues 24–59, 60–95, 96–131, and 143–178; these read EKEI…FPQG, DPSK…TSKG, NLDE…IYQM, and TPQK…DPRI. Residues D73, N75, D77, S79, E84, D109, D111, D113, Y115, E120, D156, N158, D160, K162, and E167 each contribute to the Ca(2+) site.

This sequence belongs to the recoverin family. As to quaternary structure, in contrast to Frq2, does not interact with ric8a. Enriched in synapses, such as the motor nerve endings at neuromuscular junctions. In the embryo, highly expressed in the ventral ganglia.

Its subcellular location is the cytoplasm. Ca(2+)-dependent modulation of synaptic efficacy. Also plays a role in axon terminal morphology. The sequence is that of Frequenin-1 (Frq1) from Drosophila melanogaster (Fruit fly).